An 846-amino-acid chain; its full sequence is Leucine--tRNA ligase (846 aa).

Positions 42–52 (PYPSGNLHMGH) match the 'HIGH' region motif. Positions 586–590 (KMSKS) match the 'KMSKS' region motif. Residue Lys589 coordinates ATP.

It belongs to the class-I aminoacyl-tRNA synthetase family.

Its subcellular location is the cytoplasm. It catalyses the reaction tRNA(Leu) + L-leucine + ATP = L-leucyl-tRNA(Leu) + AMP + diphosphate. The polypeptide is Leucine--tRNA ligase (Heliobacterium modesticaldum (strain ATCC 51547 / Ice1)).